The primary structure comprises 2763 residues: Large tegument protein deneddylase (2763 aa).

Residues 1 to 247 (MDIIPPIAVT…CDTYFTDEQY (247 aa)) form a deubiquitination activity region. In terms of domain architecture, Peptidase C76 spans 12–237 (AGVGSRNQFD…SSAVTLIYGS (226 aa)). Residues cysteine 32, aspartate 168, and histidine 170 contribute to the active site. Positions 495-523 (LELFINLTILRLTGFVVENGTRTHHGATS) are interaction with inner tegument protein. Residues 2456-2476 (VRPAQPAQPAQPAQPAQTVQP) form a disordered region. A run of 5 repeats spans residues 2458–2460 (PAQ), 2461–2463 (PAQ), 2464–2466 (PAQ), 2467–2469 (PAQ), and 2470–2472 (PAQ). Residues 2458–2472 (PAQPAQPAQPAQPAQ) are 5 X 3 AA repeats of P-A-Q. Over residues 2459 to 2476 (AQPAQPAQPAQPAQTVQP) the composition is skewed to low complexity.

Belongs to the herpesviridae large tegument protein family. Interacts with host CUL1 and CUL4A; these interactions inhibit the E3 ligase activity of cullins. Interacts with inner tegument protein. Interacts with capsid vertex specific component CVC2. Interacts with the major capsid protein/MCP.

It localises to the virion tegument. It is found in the host cytoplasm. The protein resides in the host nucleus. The enzyme catalyses Thiol-dependent hydrolysis of ester, thioester, amide, peptide and isopeptide bonds formed by the C-terminal Gly of ubiquitin (a 76-residue protein attached to proteins as an intracellular targeting signal).. Large tegument protein that plays multiple roles in the viral cycle. During viral entry, remains associated with the capsid while most of the tegument is detached and participates in the capsid transport toward the host nucleus. Plays a role in the routing of the capsid at the nuclear pore complex and subsequent uncoating. Within the host nucleus, acts as a deneddylase and promotes the degradation of nuclear CRLs (cullin-RING ubiquitin ligases) and thereby stabilizes nuclear CRL substrates, while cytoplasmic CRLs remain unaffected. These modifications prevent host cell cycle S-phase progression and create a favorable environment allowing efficient viral genome replication. Participates later in the secondary envelopment of capsids. Indeed, plays a linker role for the association of the outer viral tegument to the capsids together with the inner tegument protein. This chain is Large tegument protein deneddylase, found in Homo sapiens (Human).